Consider the following 488-residue polypeptide: MADPGGFLKYTHRKLPKRRPVPLRLRDWREVYEEFDNESLRQQATRCMDCGIPFCHNGCPLGNLIPEWNDLVRRGRWRDAIERLHATNNFPDFTGRLCPAPCEPACVLGINQDPVTIKQIELEIIDKAFDEGWVQPRPPRKLTGQTVAVVGSGPAGLAAAQQLTRAGHTVTVFEREDRIGGLLRYGIPEFKMEKRHLDRRLDQMRSEGTEFRPGVNVGVDISAEKLRADFDAVVLAGGATAWRELPIPGRELEGVHQAMEFLPWANRVQEGDDVLDEDGQPPITAKGKKVVIIGGGDTGADCLGTVHRQGAIAVHQFEIMPRPPDARAESTPWPTYPLMYRVSAAHEEGGERVFSVNTEAFVGTDGRVSALRAHEVTMLDGKFVKVEGSDFELEADLVLLAMGFVGPERAGLLTDLGVKFTERGNVARGDDFDTSVPGVFVAGDMGRGQSLIVWAIAEGRAAAAAVDRYLMGSSALPAPVKPTAAPLQ.

The 4Fe-4S ferredoxin-type domain maps to 38–69; that stretch reads ESLRQQATRCMDCGIPFCHNGCPLGNLIPEWN.

It depends on [4Fe-4S] cluster as a cofactor.

The enzyme catalyses 2 L-glutamate + NADP(+) = L-glutamine + 2-oxoglutarate + NADPH + H(+). The protein operates within amino-acid biosynthesis; L-glutamate biosynthesis via GLT pathway; L-glutamate from 2-oxoglutarate and L-glutamine (NADP(+) route): step 1/1. The polypeptide is Glutamate synthase [NADPH] small chain (gltD) (Mycobacterium tuberculosis (strain CDC 1551 / Oshkosh)).